The following is a 211-amino-acid chain: Uracil phosphoribosyltransferase (211 aa).

Residues Arg-77, Arg-102, and 129–137 contribute to the 5-phospho-alpha-D-ribose 1-diphosphate site; that span reads DPMLATGGS. Residues Ile-192 and 197 to 199 contribute to the uracil site; that span reads GDA. Asp-198 contributes to the 5-phospho-alpha-D-ribose 1-diphosphate binding site.

Belongs to the UPRTase family. Requires Mg(2+) as cofactor.

The enzyme catalyses UMP + diphosphate = 5-phospho-alpha-D-ribose 1-diphosphate + uracil. The protein operates within pyrimidine metabolism; UMP biosynthesis via salvage pathway; UMP from uracil: step 1/1. With respect to regulation, allosterically activated by GTP. Catalyzes the conversion of uracil and 5-phospho-alpha-D-ribose 1-diphosphate (PRPP) to UMP and diphosphate. This chain is Uracil phosphoribosyltransferase, found in Corynebacterium efficiens (strain DSM 44549 / YS-314 / AJ 12310 / JCM 11189 / NBRC 100395).